Consider the following 118-residue polypeptide: Ribosome-binding factor A (118 aa).

It belongs to the RbfA family. In terms of assembly, monomer. Binds 30S ribosomal subunits, but not 50S ribosomal subunits or 70S ribosomes.

It localises to the cytoplasm. Functionally, one of several proteins that assist in the late maturation steps of the functional core of the 30S ribosomal subunit. Associates with free 30S ribosomal subunits (but not with 30S subunits that are part of 70S ribosomes or polysomes). Required for efficient processing of 16S rRNA. May interact with the 5'-terminal helix region of 16S rRNA. This chain is Ribosome-binding factor A, found in Clostridium beijerinckii (strain ATCC 51743 / NCIMB 8052) (Clostridium acetobutylicum).